A 367-amino-acid polypeptide reads, in one-letter code: tRNA-specific 2-thiouridylase MnmA (367 aa).

Residues 10–17 (AMSGGVDS) and Met36 contribute to the ATP site. Catalysis depends on Cys106, which acts as the Nucleophile. Cys106 and Cys204 are oxidised to a cystine. Residue Gly130 participates in ATP binding. The tract at residues 154 to 156 (KDQ) is interaction with tRNA. Cys204 functions as the Cysteine persulfide intermediate in the catalytic mechanism. The interaction with tRNA stretch occupies residues 310–311 (RY).

It belongs to the MnmA/TRMU family.

The protein localises to the cytoplasm. It carries out the reaction S-sulfanyl-L-cysteinyl-[protein] + uridine(34) in tRNA + AH2 + ATP = 2-thiouridine(34) in tRNA + L-cysteinyl-[protein] + A + AMP + diphosphate + H(+). In terms of biological role, catalyzes the 2-thiolation of uridine at the wobble position (U34) of tRNA, leading to the formation of s(2)U34. The protein is tRNA-specific 2-thiouridylase MnmA of Desulforamulus reducens (strain ATCC BAA-1160 / DSM 100696 / MI-1) (Desulfotomaculum reducens).